Consider the following 104-residue polypeptide: Replication restart protein PriB (104 aa).

The region spanning 1 to 101 is the SSB domain; it reads MTNRLALSGT…LHAEQIELID (101 aa).

The protein belongs to the PriB family. In terms of assembly, homodimer. Interacts with PriA and DnaT. Component of the replication restart primosome. Primosome assembly occurs via a 'hand-off' mechanism. PriA binds to replication forks, subsequently PriB then DnaT bind; DnaT then displaces ssDNA to generate the helicase loading substrate.

In terms of biological role, involved in the restart of stalled replication forks, which reloads the replicative helicase on sites other than the origin of replication; the PriA-PriB pathway is the major replication restart pathway. During primosome assembly it facilitates complex formation between PriA and DnaT on DNA; stabilizes PriA on DNA. Stimulates the DNA unwinding activity of PriA helicase. This chain is Replication restart protein PriB, found in Salmonella agona (strain SL483).